A 511-amino-acid chain; its full sequence is Sodium/proline symporter (511 aa).

13 consecutive transmembrane segments (helical) span residues 16–36 (WQTY…AFTY), 53–73 (IGPY…WMIM), 84–104 (LSAM…YFVV), 138–158 (IISG…GFVS), 173–193 (FGLI…GYLA), 199–219 (FFQG…AMMN), 239–259 (LFKG…LGYF), 285–305 (ISWM…GIAF), 326–346 (VLFH…AIMS), 380–400 (FVMI…AIAW), 409–429 (LVGN…LFAL), 437–457 (AGAV…IAWI), and 466–486 (IFGL…TYVV).

This sequence belongs to the sodium:solute symporter (SSF) (TC 2.A.21) family.

The protein resides in the cell membrane. It catalyses the reaction L-proline(in) + Na(+)(in) = L-proline(out) + Na(+)(out). In terms of biological role, catalyzes the sodium-dependent uptake of extracellular L-proline. Since most S.aureus strains are L-proline auxotrophs, this transporter may aid the bacterial persistence during an infection of tissues with low proline concentrations. The sequence is that of Sodium/proline symporter from Staphylococcus aureus.